The sequence spans 776 residues: Protocadherin beta-16 (776 aa).

The first 28 residues, 1–28 (MEIGWMHNRRQRQVLVFFVLLSLSGAGA), serve as a signal peptide directing secretion. The Extracellular portion of the chain corresponds to 29–690 (ELGSYSVVEE…TQANSLTVYL (662 aa)). Cadherin domains lie at 35–133 (VVEE…SPMF), 138–242 (MILK…APEF), 247–347 (YKVQ…PPQV), 352–451 (LTSP…APTF), and 456–561 (YTLF…SPFV). 2 N-linked (GlcNAc...) asparagine glycosylation sites follow: Asn418 and Asn436. The N-linked (GlcNAc...) asparagine glycan is linked to Asn567. The Cadherin 6 domain maps to 568–671 (GSAPCTELVP…LVDGFSQPFL (104 aa)). Residues 691–711 (VVALASVSSLFLFSVLLFVAV) traverse the membrane as a helical segment. Residues 712 to 776 (RLCRRSRAAS…LKPIIPNFSP (65 aa)) lie on the Cytoplasmic side of the membrane.

It localises to the membrane. In terms of biological role, potential calcium-dependent cell-adhesion protein. May be involved in the establishment and maintenance of specific neuronal connections in the brain. This chain is Protocadherin beta-16, found in Homo sapiens (Human).